A 1003-amino-acid chain; its full sequence is MVELNNCSNSEETGGVDSLEVRFTDFCKNGLSMGESFVTEATKLFNDSKHLLLSNNSTIGVITQEGVERYWFVFVLYSVKRLSEKEAGNSNNGDKGNAFSLCQILRGAKLNVVDFFKELPQFILKVGPTLSNLYGSDWEKRLEVKELQTNFVHLSLLSKYYKRAYQELFLASGNNEDKPSATSNSAIHLPQYYRFGWLLFLSLRIHVFSRFKDLVTCTNGLVSVLAILMIHVPVRFRNFNIDDSSRFVKKGDKVDLLASLSKIYQTSIDDLRETMDKVNNLITEKLKKKPCLASEFRTENLDNLDTDGLTYFEDLMEESCLSSSVSTLEKDYSDAIQNKGELDERIFVNEEDSLLGSGSLSGGAVNMNGTKRKFDAMASPAKTVTSTLSPYRSPNCANSKMTAATPVSTAMTTARWLRTVIAPLQPKPSAELERFLSSCDRDVTADVIRRAQIILEAIFPSSGPAEHCAAGGSLQSTSLMDNIWAEQRRSEALKLYYRVLQTMCTAESQILNGNNLTSLLTNERFHRCMLACSAELVLATHKTVTMLFPAVLERTGITAFDLSKVIESFIRHEESLPRELRRHLNSLEERLLESMVWEKGSSMYNSLAVAKPSLAAEINRMGLLAEPMPSLDAIAMHINLSSGSLPPLPSLHKNNLAPNGQIGDIRSPKKVCSEYRSVLVERNSFTSPVKDRFLALNNIKSKFPPPALHSAFASPTRPNPGGGGETCAETAINVFFGKIVKLAAVRINGMIERLQLSQQIRETVYCLFQKILSQRTSLFFNRHIDQIILCSFYGVAKISQLNLTFKEIICNYRKQPQCKPQVFRSVFVDWTLARHNVRTGADHVDIITFYNEMFIPSVKPLLVELAPAGNNSEKNDHNDGQGPASPKPSPFPKLPDMSPKKVSAVHNVYVSPLRASKMDALISHSSKSYYACVGESTHAYQSPSKDLDVINNRLNGNRKLRGALNFDVDAGLVSDSIVANSLYLQNGNCRSPVAHVKTEQPES.

Residues 405-607 (TPVSTAMTTA…EKGSSMYNSL (203 aa)) form a domain A region. A pocket region spans residues 405–860 (TPVSTAMTTA…NEMFIPSVKP (456 aa)). The interval 608–729 (AVAKPSLAAE…PGGGGETCAE (122 aa)) is spacer. Residues 730 to 860 (TAINVFFGKI…NEMFIPSVKP (131 aa)) form a domain B region. The tract at residues 868 to 899 (AGNNSEKNDHNDGQGPASPKPSPFPKLPDMSP) is disordered.

It belongs to the retinoblastoma protein (RB) family. In terms of tissue distribution, expressed in roots, stems, leaves and flowers.

The protein resides in the nucleus. Regulator of biological processes that recruits a histone deacetylase to control gene transcription. Formation of stable complexes with geminiviridae replication-associated proteins may create a cellular environment which favors viral DNA replication. May play a role in the entry into mitosis, negatively regulating the cell proliferation during leaf, stem, and flower development. Critical regulator of the endocycle. The chain is Retinoblastoma-related protein 1 (RBR1) from Nicotiana benthamiana.